Reading from the N-terminus, the 115-residue chain is Nascent polypeptide-associated complex protein (115 aa).

Residues 6 to 72 enclose the NAC-A/B domain; sequence PMNPKQLKKL…SEEEKAIINI (67 aa).

The protein belongs to the NAC-alpha family. Homodimer. Interacts with the ribosome. Binds ribosomal RNA.

Its function is as follows. Contacts the emerging nascent chain on the ribosome. The sequence is that of Nascent polypeptide-associated complex protein from Pyrococcus horikoshii (strain ATCC 700860 / DSM 12428 / JCM 9974 / NBRC 100139 / OT-3).